The sequence spans 630 residues: tRNA uridine 5-carboxymethylaminomethyl modification enzyme MnmG (630 aa).

FAD is bound at residue 13–18; the sequence is GGGHAG. Position 273 to 287 (273 to 287) interacts with NAD(+); sequence GPRYCPSIEDKVNRF.

Belongs to the MnmG family. Homodimer. Heterotetramer of two MnmE and two MnmG subunits. Requires FAD as cofactor.

It is found in the cytoplasm. NAD-binding protein involved in the addition of a carboxymethylaminomethyl (cmnm) group at the wobble position (U34) of certain tRNAs, forming tRNA-cmnm(5)s(2)U34. The sequence is that of tRNA uridine 5-carboxymethylaminomethyl modification enzyme MnmG from Teredinibacter turnerae (strain ATCC 39867 / T7901).